A 1201-amino-acid polypeptide reads, in one-letter code: Protein dduB (1201 aa).

Residues 1 to 22 (MKFIKYLLILFLILKINYFVES) form the signal peptide. At 23–1180 (GVDCQKNTEY…QDPSDELSTS (1158 aa)) the chain is on the extracellular side. N68, N122, N150, N185, N283, N348, N360, N437, N448, N518, N535, N554, N585, N631, N759, N815, N830, N844, N946, N1042, N1058, N1098, and N1108 each carry an N-linked (GlcNAc...) asparagine glycan. A helical transmembrane segment spans residues 1181 to 1201 (SFIQLNILSLLLISIFTIFIL).

The protein localises to the membrane. The polypeptide is Protein dduB (dduB) (Dictyostelium discoideum (Social amoeba)).